Reading from the N-terminus, the 184-residue chain is Adenylate kinase 1 (184 aa).

Residue 11–16 coordinates ATP; it reads GAGKGT. The segment at 31–60 is NMP; the sequence is STGDILRQAMKEQTPLGIKAQSYVDSGELV. AMP is bound by residues T32, R37, 58–60, 86–89, and Q93; these read ELV and GFPR. The interval 127–133 is LID; that stretch reads SRGRKDD. Residue R128 coordinates ATP. Positions 130 and 141 each coordinate AMP. Q169 provides a ligand contact to ATP.

Belongs to the adenylate kinase family. In terms of assembly, monomer.

The protein localises to the cytoplasm. It catalyses the reaction AMP + ATP = 2 ADP. The protein operates within purine metabolism; AMP biosynthesis via salvage pathway; AMP from ADP: step 1/1. In terms of biological role, catalyzes the reversible transfer of the terminal phosphate group between ATP and AMP. Plays an important role in cellular energy homeostasis and in adenine nucleotide metabolism. The sequence is that of Adenylate kinase 1 from Nostoc sp. (strain PCC 7120 / SAG 25.82 / UTEX 2576).